Here is a 101-residue protein sequence, read N- to C-terminus: Small ribosomal subunit protein uS10 (101 aa).

This sequence belongs to the universal ribosomal protein uS10 family. Part of the 30S ribosomal subunit.

In terms of biological role, involved in the binding of tRNA to the ribosomes. The chain is Small ribosomal subunit protein uS10 from Parabacteroides distasonis (strain ATCC 8503 / DSM 20701 / CIP 104284 / JCM 5825 / NCTC 11152).